Here is a 175-residue protein sequence, read N- to C-terminus: VQ motif-containing protein 25 (175 aa).

Positions 50–59 (FRELVQSLTG) match the VQ motif.

It localises to the nucleus. Functionally, may function as negative regulator of plant defense. In Arabidopsis thaliana (Mouse-ear cress), this protein is VQ motif-containing protein 25.